Consider the following 177-residue polypeptide: Large ribosomal subunit protein uL6 (177 aa).

The protein belongs to the universal ribosomal protein uL6 family. In terms of assembly, part of the 50S ribosomal subunit.

Functionally, this protein binds to the 23S rRNA, and is important in its secondary structure. It is located near the subunit interface in the base of the L7/L12 stalk, and near the tRNA binding site of the peptidyltransferase center. The chain is Large ribosomal subunit protein uL6 from Cupriavidus taiwanensis (strain DSM 17343 / BCRC 17206 / CCUG 44338 / CIP 107171 / LMG 19424 / R1) (Ralstonia taiwanensis (strain LMG 19424)).